We begin with the raw amino-acid sequence, 485 residues long: Calcium-dependent protein kinase 27 (485 aa).

A lipid anchor (N-myristoyl glycine) is attached at G2. Residues 28–290 (YILGEELGRG…AAEVLGHPWM (263 aa)) enclose the Protein kinase domain. Residues 34–42 (LGRGNFGLT) and K57 each bind ATP. The Proton acceptor role is filled by D156. The residue at position 196 (S196) is a Phosphoserine. An autoinhibitory domain region spans residues 295 to 325 (ASDKPIDGVVLSRLKRFRDANKFKKVVLKFI). EF-hand domains are found at residues 332–367 (EEIKGLKTLFTNIDTDKSGNITLEELKTGLTRLGSN), 368–403 (LSKTEVEQLMEAADMDGNGTIDIDEFISATMHRYKL), 404–439 (DRDEHVYKAFQHFDKDNDGHITKEELEMAMKEDGAG), and 444–474 (IKQIIADADTDNDGKINFEEFRTMMRTESSL). Ca(2+)-binding residues include D345, D347, S349, N351, E356, D381, D383, N385, T387, E392, D417, D419, D421, H423, E428, D452, D454, D456, K458, and E463.

This sequence belongs to the protein kinase superfamily. Ser/Thr protein kinase family. CDPK subfamily.

Its subcellular location is the membrane. It catalyses the reaction L-seryl-[protein] + ATP = O-phospho-L-seryl-[protein] + ADP + H(+). The enzyme catalyses L-threonyl-[protein] + ATP = O-phospho-L-threonyl-[protein] + ADP + H(+). With respect to regulation, activated by calcium. Autophosphorylation may play an important role in the regulation of the kinase activity. In terms of biological role, may play a role in signal transduction pathways that involve calcium as a second messenger. The protein is Calcium-dependent protein kinase 27 (CPK27) of Arabidopsis thaliana (Mouse-ear cress).